The following is a 383-amino-acid chain: Schlafen-like protein 3 (383 aa).

Residues 118–266 (FDYQSNFSDV…SDKVYQISSG (149 aa)) form an SLFN-like fold region. Residues 354–374 (LLDIQNIGWIFFGTALSFCIY) form a helical membrane-spanning segment.

It belongs to the Schlafen family. Component of the PUCH (precursor of 21U RNA 5'-end cleavage holoenzyme) complex; consisting of tofu-1, tofu-2 and either slfl-3 or slfl-4. Within the complex, interacts (via N-terminus) with tofu-2 (via N-terminus); the presence of tofu-1 is required for the interaction.

It localises to the mitochondrion membrane. Its function is as follows. Component of the trimeric PUCH (precursor of 21U RNA 5'-end cleavage holoenzyme) complex, that acts as an endoribonuclease processing the 5'-end of precursor Piwi-interacting RNAs (piRNAs). The PUCH complex consists of tofu-1, tofu-2 and either slfl-3 or slfl-4, where tofu-2 exhibits endoribonuclease activity. PUCH-mediated processing strictly requires a 7-methyl-G cap (m7 G-cap) and an uracil at position three (U3). PUCH also exhibits a strict bias for piRNA precursors with an A or G at position 1. Mature piRNA production is enhanced by the interaction of PUCH with the PETISCO complex, which is stabilizing piRNA precursors and allows their processing by PUCH. The chain is Schlafen-like protein 3 from Caenorhabditis elegans.